Reading from the N-terminus, the 818-residue chain is MFLGRAASRTCRHSQPLRVAARAKSTTTAVASSSWHQYGVTGGILASTSSSSRTVVNPAKQRRWVRMASTATATKPTEEASSSDQPPAPAHKLTDNDVKRLTFQRNIGISAHIDSGKTTLSERILFYTGKIREIHEVRGRDAVGAKMDNMDLEREKGITIQSAATFCDWEATNPEDGSKQKYSINVIDTPGHVDFTIEVERALRVLDGAILVLCAVAGVQSQTTTVDRQMRRYNVPRISFINKMDRPGANPWRIVNQIRTKLRMPAAAVQVPIGTEDELKGVVDLVHWRALYNEGPKGTEIRVSKDIPESVAELAKQKRAELIEQLAEVDEEIGELFLMDETPTNRQIADAIRRATIDLKFSPVFMGSAMKNTGVQFLLDGVCEYLPNPSEREVLAIDNKNLDPATASSQASQTPNVPLVPAAAAPFVGLAFKLEEGRFGQLTYVRVYQGTLKKAMNIWNVRTGKKVKVPRLVRMHSDEMEDIDSIGPGEICAMFGVECSSGDTFTDGTSTYSMTSMFVPEPVISLAIKPKGQETPNFSRALNRFQKEDPTFRVHIDQESKETIISGMGELHLEIYVERMRREYNTECITGKPRVAFRETITQRAEFAYTHKKQTGGAGQFARVIGYIEPMEMDPETGKDVAFENLVMGGNIPTNFIPAVEKGFYEALEKGSLTGNPITGVRFVLKDGAFHAVDSSELAFRLATIGAFREAFKKARGIVLEPVMTVDVVAPSEFQSNVIGGLNTRRGTIVDSEVRDDEFTAVAEVALNDMFGYSNQLRGSTQGKGEFSMEYKHHAPVLPNVQKELEEAYQKTLPQSKK.

The N-terminal 23 residues, 1 to 23 (MFLGRAASRTCRHSQPLRVAARA), are a transit peptide targeting the mitochondrion. The interval 67-96 (MASTATATKPTEEASSSDQPPAPAHKLTDN) is disordered. Positions 69–85 (STATATKPTEEASSSDQ) are enriched in polar residues. In terms of domain architecture, tr-type G spans 102–390 (TFQRNIGISA…GVCEYLPNPS (289 aa)). Residues 111 to 118 (AHIDSGKT), 188 to 192 (DTPGH), and 242 to 245 (NKMD) contribute to the GTP site.

It belongs to the TRAFAC class translation factor GTPase superfamily. Classic translation factor GTPase family. EF-G/EF-2 subfamily.

The protein localises to the mitochondrion. Its pathway is protein biosynthesis; polypeptide chain elongation. In terms of biological role, mitochondrial GTPase that catalyzes the GTP-dependent ribosomal translocation step during translation elongation. During this step, the ribosome changes from the pre-translocational (PRE) to the post-translocational (POST) state as the newly formed A-site-bound peptidyl-tRNA and P-site-bound deacylated tRNA move to the P and E sites, respectively. Catalyzes the coordinated movement of the two tRNA molecules, the mRNA and conformational changes in the ribosome. The sequence is that of Elongation factor G, mitochondrial from Coprinopsis cinerea (strain Okayama-7 / 130 / ATCC MYA-4618 / FGSC 9003) (Inky cap fungus).